A 255-amino-acid chain; its full sequence is MRPILIAGNWKMHKTQAEARQFLREFRPALQASSAGVRPQRQIILCVPFTDLAVVVEETRGSGMAVGAQNLHWEDQGAFTGEISGPMLAELGVRYVIVGHSERRQYFGETDETVNRRLAAAQRHGLTPILCVGESLQQREQGLTESWIVGQLDRALPGIDLRNLVIAYEPIWAIGTGKTCAAAEANRVIGLIRQHLGADHLPILYGGSVKASNIDELMAQPQIDGVLVGGASLDPQEFARIVNFQALTPAAAAAP.

9–11 is a substrate binding site; the sequence is NWK. Catalysis depends on His100, which acts as the Electrophile. The Proton acceptor role is filled by Glu169. Substrate is bound by residues Gly175, Ser208, and 229 to 230; that span reads GG.

The protein belongs to the triosephosphate isomerase family. In terms of assembly, homodimer.

It localises to the cytoplasm. The enzyme catalyses D-glyceraldehyde 3-phosphate = dihydroxyacetone phosphate. It participates in carbohydrate biosynthesis; gluconeogenesis. The protein operates within carbohydrate degradation; glycolysis; D-glyceraldehyde 3-phosphate from glycerone phosphate: step 1/1. Its function is as follows. Involved in the gluconeogenesis. Catalyzes stereospecifically the conversion of dihydroxyacetone phosphate (DHAP) to D-glyceraldehyde-3-phosphate (G3P). The protein is Triosephosphate isomerase of Synechococcus sp. (strain JA-3-3Ab) (Cyanobacteria bacterium Yellowstone A-Prime).